The primary structure comprises 261 residues: MIIDLHVQRYGPSGPARVLTIHGVTEHGRIWHRLAHHLPEIPIAAPDLLGHGRSPWAAPWTIDANVSALAALLDNQGDGPVVVVGHSFGGAVAMHLAAARPDQVAALVLLDPAVALDGSRVREVVDAMLASPDYLDPAEARAEKATGAWADVDPPVLDAELDEHLVALPNGRYGWRISLPAMVCYWSELARDIVLPPVGTATTLVRAVRASPAYVSDQLLAALDKRLGADFELLDFDCGHMVPQAKPTEVAAVIRSRLGPR.

Residue serine 87 is the Nucleophile of the active site. Active-site charge relay system residues include aspartate 217 and histidine 240.

This sequence belongs to the AB hydrolase superfamily.

It carries out the reaction a carboxylic ester + H2O = an alcohol + a carboxylate + H(+). The catalysed reaction is a tetradecanoate ester + H2O = an aliphatic alcohol + tetradecanoate + H(+). The enzyme catalyses decanoate ester + H2O = decanoate + an aliphatic alcohol + H(+). It catalyses the reaction an octanoate ester + H2O = an aliphatic alcohol + octanoate + H(+). It carries out the reaction a dodecanoate ester + H2O = an aliphatic alcohol + dodecanoate + H(+). The catalysed reaction is a butanoate ester + H2O = an aliphatic alcohol + butanoate + H(+). The enzyme catalyses hexadecanoate ester + H2O = an aliphatic alcohol + hexadecanoate + H(+). It catalyses the reaction octadecanoate ester + H2O = an aliphatic alcohol + octadecanoate + H(+). Is inhibited by tetrahydrolipstatin, a specific lipase inhibitor and RHC 80267, a diacylglycerol lipase inhibitor, but not by phenylglyoxal and iodoacetate. Lipase that displays broad substrate specificity and preferentially hydrolyzes p-nitrophenyl myristate in vitro. Also shows significant activity with pNP-butyrate (68%), pNP-octanoate (82%), pNP-decanoate (90%), and pNP-laurate (74%). Is probably involved in lipid catabolism. Is active at low pH, and might play some important role in mycobacterial biology in macrophages where the bacteria encounters acidic stress. The polypeptide is Lipase LipV (Mycobacterium tuberculosis (strain ATCC 25618 / H37Rv)).